Consider the following 74-residue polypeptide: Conotoxin VnMEKL-0221 (74 aa).

The first 19 residues, 1–19 (MEKLTILLLVAAVLMWTQA), serve as a signal peptide directing secretion. A propeptide spanning residues 20 to 46 (LIQEKRPKEKIKFLSKRKTTAESWWEG) is cleaved from the precursor. 3 disulfides stabilise this stretch: Cys48–Cys62, Cys55–Cys66, and Cys61–Cys71.

Belongs to the conotoxin O2 superfamily. Expressed by the venom duct.

The protein localises to the secreted. This chain is Conotoxin VnMEKL-0221, found in Conus ventricosus (Mediterranean cone).